The primary structure comprises 721 residues: Glucans biosynthesis glucosyltransferase H (721 aa).

6 helical membrane passes run 52-72, 97-117, 412-432, 459-479, 505-525, and 570-590; these read CSWRRVFVVGFALLISAFAIF, NFCWIALAFSSSIAGFFVLAS, SPFWLLLILSGLLLALQAHFI, FYITMGILFSPKIFGLLLLMF, ALVAPIMMLIHCGAVVSILFG, and LLAWMSPALIGLWFSVPLSGI.

The protein belongs to the glycosyltransferase 2 family. OpgH subfamily.

It is found in the cell inner membrane. It participates in glycan metabolism; osmoregulated periplasmic glucan (OPG) biosynthesis. Involved in the biosynthesis of osmoregulated periplasmic glucans (OPGs). This is Glucans biosynthesis glucosyltransferase H from Vibrio cholerae serotype O1 (strain ATCC 39541 / Classical Ogawa 395 / O395).